A 365-amino-acid chain; its full sequence is Peptide chain release factor 2 (365 aa).

Residue Gln-252 is modified to N5-methylglutamine.

It belongs to the prokaryotic/mitochondrial release factor family. In terms of processing, methylated by PrmC. Methylation increases the termination efficiency of RF2.

The protein resides in the cytoplasm. Peptide chain release factor 2 directs the termination of translation in response to the peptide chain termination codons UGA and UAA. This chain is Peptide chain release factor 2 (prfB), found in Haemophilus influenzae (strain ATCC 51907 / DSM 11121 / KW20 / Rd).